The sequence spans 926 residues: Chitin synthase-like protein 2 (926 aa).

Residues 1-56 (MSFQNPSYINAKHRSFLQPKDTQDSQDLRNWVSHSSVDEETAYSSSTLSSSSSKSF) are disordered. Low complexity predominate over residues 44 to 55 (SSSTLSSSSSKS). The next 7 membrane-spanning stretches (helical) occupy residues 564–584 (INSS…LWTT), 599–619 (LVFA…FLAF), 641–661 (LFLV…MLAM), 671–691 (LLFI…FCVF), 721–741 (LLIL…FFIF), 853–873 (VLVW…VFDG), and 885–905 (IFWS…TFIA).

It belongs to the chitin synthase family.

The protein resides in the membrane. In terms of biological role, plays a role in septum formation. Has no chitin synthase activity. The polypeptide is Chitin synthase-like protein 2 (chs2) (Schizosaccharomyces pombe (strain 972 / ATCC 24843) (Fission yeast)).